A 268-amino-acid polypeptide reads, in one-letter code: Tryptophan synthase alpha chain (268 aa).

Catalysis depends on proton acceptor residues glutamate 49 and aspartate 60.

Belongs to the TrpA family. In terms of assembly, tetramer of two alpha and two beta chains.

It catalyses the reaction (1S,2R)-1-C-(indol-3-yl)glycerol 3-phosphate + L-serine = D-glyceraldehyde 3-phosphate + L-tryptophan + H2O. It functions in the pathway amino-acid biosynthesis; L-tryptophan biosynthesis; L-tryptophan from chorismate: step 5/5. The alpha subunit is responsible for the aldol cleavage of indoleglycerol phosphate to indole and glyceraldehyde 3-phosphate. The sequence is that of Tryptophan synthase alpha chain from Escherichia coli O17:K52:H18 (strain UMN026 / ExPEC).